The primary structure comprises 593 residues: Transcription factor ATEG_07667 (593 aa).

The segment at residues 18-47 (CTQCYKAKCRCVRTPSGDTCERCIRLKKRC) is a DNA-binding region (zn(2)-C6 fungal-type).

The protein localises to the nucleus. Its function is as follows. Transcriptional regulator that regulates both the azasperpyranone A biosynthesis clusters A and B. Specifically up-regulates the expression of the cluster A and B specific transcription factors ATEG_03638 and ATEG_07666, which in turn activate the expression of their respective clusters. In Aspergillus terreus (strain NIH 2624 / FGSC A1156), this protein is Transcription factor ATEG_07667.